A 423-amino-acid chain; its full sequence is 3-phosphoshikimate 1-carboxyvinyltransferase (423 aa).

Positions 21, 22, and 26 each coordinate 3-phosphoshikimate. Residue lysine 21 participates in phosphoenolpyruvate binding. The phosphoenolpyruvate site is built by glycine 92 and arginine 120. Residues serine 166, glutamine 168, serine 194, aspartate 310, and lysine 337 each coordinate 3-phosphoshikimate. Position 168 (glutamine 168) interacts with phosphoenolpyruvate. Aspartate 310 serves as the catalytic Proton acceptor. Residues arginine 341, arginine 384, and lysine 409 each coordinate phosphoenolpyruvate.

It belongs to the EPSP synthase family. In terms of assembly, monomer.

The protein localises to the cytoplasm. The enzyme catalyses 3-phosphoshikimate + phosphoenolpyruvate = 5-O-(1-carboxyvinyl)-3-phosphoshikimate + phosphate. The protein operates within metabolic intermediate biosynthesis; chorismate biosynthesis; chorismate from D-erythrose 4-phosphate and phosphoenolpyruvate: step 6/7. Catalyzes the transfer of the enolpyruvyl moiety of phosphoenolpyruvate (PEP) to the 5-hydroxyl of shikimate-3-phosphate (S3P) to produce enolpyruvyl shikimate-3-phosphate and inorganic phosphate. The protein is 3-phosphoshikimate 1-carboxyvinyltransferase of Syntrophobacter fumaroxidans (strain DSM 10017 / MPOB).